The chain runs to 171 residues: Disulfide bond formation protein B (171 aa).

At 1 to 10 (MQRLLTYRAL) the chain is on the cytoplasmic side. The chain crosses the membrane as a helical span at residues 11 to 27 (NFILFIASVVAMLFAII). The Periplasmic portion of the chain corresponds to 28 to 46 (FLQNYKGLEPCPLCIFQRI). Residues Cys38 and Cys41 are joined by a disulfide bond. The chain crosses the membrane as a helical span at residues 47–63 (GLMVMGGFSLIAAVGHP). The Cytoplasmic segment spans residues 64–70 (KKMGMQL). A helical transmembrane segment spans residues 71–88 (LLWIGSMAGILWSAGVAA). The Periplasmic segment spans residues 89 to 145 (RHVWIQHLPADQVPACGPGLDYFLEALPMKQVINQVLSGSGECAEISWRFLGLSIPE). An intrachain disulfide couples Cys104 to Cys131. The chain crosses the membrane as a helical span at residues 146-164 (QALILFTALILVNLLVLWR). Topologically, residues 165–171 (IISKRTA) are cytoplasmic.

It belongs to the DsbB family.

It is found in the cell inner membrane. Functionally, required for disulfide bond formation in some periplasmic proteins. Acts by oxidizing the DsbA protein. The polypeptide is Disulfide bond formation protein B (Psychrobacter sp. (strain PRwf-1)).